A 208-amino-acid chain; its full sequence is MKIVEVKHPLVKHKLGLMREGDISTKRFRELATEVASLLTYEATSDFETEKVTIEGWNGPVQVDQIKGKKVTVVPILRAGLGMMDGVLEHIPSARISVVGIYRDEETLEPVPYFNKLATNIEERIAMVVDPMLAIGGSMIATIDLLKEKGCNQIKVLVLVAAPEGIAALEKAHPDVELYTAAIDEKLNDKGYIVPGLGDAGDKIFGTK.

Residues Arg-78, Arg-103, and 130 to 138 (DPMLAIGGS) each bind 5-phospho-alpha-D-ribose 1-diphosphate. Residues Ile-193 and 198-200 (GDA) contribute to the uracil site. Residue Asp-199 coordinates 5-phospho-alpha-D-ribose 1-diphosphate.

The protein belongs to the UPRTase family. Requires Mg(2+) as cofactor.

It carries out the reaction UMP + diphosphate = 5-phospho-alpha-D-ribose 1-diphosphate + uracil. It participates in pyrimidine metabolism; UMP biosynthesis via salvage pathway; UMP from uracil: step 1/1. Allosterically activated by GTP. Its function is as follows. Catalyzes the conversion of uracil and 5-phospho-alpha-D-ribose 1-diphosphate (PRPP) to UMP and diphosphate. This Vibrio cholerae serotype O1 (strain ATCC 39315 / El Tor Inaba N16961) protein is Uracil phosphoribosyltransferase.